The primary structure comprises 99 residues: NADH-quinone oxidoreductase subunit K (99 aa).

3 consecutive transmembrane segments (helical) span residues 3–23, 28–48, and 59–79; these read PANYLYLSALLFTIGASGVLL, IVMFMCVELMLNAVNLAFVTF, and MIAFFTMVVAACEVVVGLAII.

The protein belongs to the complex I subunit 4L family. As to quaternary structure, NDH-1 is composed of 14 different subunits. Subunits NuoA, H, J, K, L, M, N constitute the membrane sector of the complex.

It localises to the cell membrane. It carries out the reaction a quinone + NADH + 5 H(+)(in) = a quinol + NAD(+) + 4 H(+)(out). Functionally, NDH-1 shuttles electrons from NADH, via FMN and iron-sulfur (Fe-S) centers, to quinones in the respiratory chain. The immediate electron acceptor for the enzyme in this species is believed to be a menaquinone. Couples the redox reaction to proton translocation (for every two electrons transferred, four hydrogen ions are translocated across the cytoplasmic membrane), and thus conserves the redox energy in a proton gradient. This chain is NADH-quinone oxidoreductase subunit K, found in Mycobacterium marinum (strain ATCC BAA-535 / M).